Reading from the N-terminus, the 336-residue chain is Dihydroorotate dehydrogenase (quinone) (336 aa).

Residues alanine 62–lysine 66 and threonine 86 contribute to the FMN site. Residue lysine 66 participates in substrate binding. Asparagine 111–phenylalanine 115 lines the substrate pocket. 2 residues coordinate FMN: asparagine 139 and asparagine 172. Asparagine 172 is a substrate binding site. Residue serine 175 is the Nucleophile of the active site. Substrate is bound at residue asparagine 177. Lysine 217 and threonine 245 together coordinate FMN. Residue asparagine 246–threonine 247 coordinates substrate. Residues glycine 268, glycine 297, and tyrosine 318–serine 319 contribute to the FMN site.

The protein belongs to the dihydroorotate dehydrogenase family. Type 2 subfamily. As to quaternary structure, monomer. It depends on FMN as a cofactor.

It is found in the cell membrane. It carries out the reaction (S)-dihydroorotate + a quinone = orotate + a quinol. Its pathway is pyrimidine metabolism; UMP biosynthesis via de novo pathway; orotate from (S)-dihydroorotate (quinone route): step 1/1. Catalyzes the conversion of dihydroorotate to orotate with quinone as electron acceptor. This Edwardsiella ictaluri (strain 93-146) protein is Dihydroorotate dehydrogenase (quinone).